The primary structure comprises 626 residues: Janus kinase and microtubule-interacting protein 1 (626 aa).

Positions 1–25 are disordered; that stretch reads MSKKGRSKGDKPEAETDSVQMANEE. Residues 1–365 are mediates association with microtubules; it reads MSKKGRSKGD…KLKSLTRENV (365 aa). Coiled-coil stretches lie at residues 13–255 and 284–413; these read EAET…EAER and ERDV…DDLS. Residues 365 to 626 form a mediates interaction with TYK2 and GABBR1 region; it reads VEMKEKLSAQ…ILFEPKLKFM (262 aa). Phosphoserine is present on serine 382. Positions 452–461 are enriched in polar residues; sequence ETLSETSYNT. Residues 452–481 form a disordered region; it reads ETLSETSYNTDRTDRTPATPEEDLDETTTR. The residue at position 470 (threonine 470) is a Phosphothreonine. The stretch at 490 to 604 forms a coiled coil; it reads QLTREYQALQ…EFRVLELEVR (115 aa).

The protein belongs to the JAKMIP family. As to quaternary structure, homodimer. Interacts with JAK1 and TYK2. Forms a complex with GABBR1 and KIF5B/kinesin-1. In terms of processing, phosphorylated.

Its subcellular location is the cytoplasm. The protein localises to the cytoskeleton. It is found in the membrane. Associates with microtubules and may play a role in the microtubule-dependent transport of the GABA-B receptor. May play a role in JAK1 signaling and regulate microtubule cytoskeleton rearrangements. This is Janus kinase and microtubule-interacting protein 1 (Jakmip1) from Mus musculus (Mouse).